We begin with the raw amino-acid sequence, 215 residues long: Pyrrolidone-carboxylate peptidase (215 aa).

Residues glutamate 81, cysteine 144, and histidine 168 contribute to the active site.

It belongs to the peptidase C15 family. Homotetramer.

The protein resides in the cytoplasm. The enzyme catalyses Release of an N-terminal pyroglutamyl group from a polypeptide, the second amino acid generally not being Pro.. In terms of biological role, removes 5-oxoproline from various penultimate amino acid residues except L-proline. This Bacillus velezensis (strain DSM 23117 / BGSC 10A6 / LMG 26770 / FZB42) (Bacillus amyloliquefaciens subsp. plantarum) protein is Pyrrolidone-carboxylate peptidase.